The primary structure comprises 148 residues: NADPH-dependent 7-cyano-7-deazaguanine reductase (148 aa).

C50 serves as the catalytic Thioimide intermediate. The active-site Proton donor is D57. Substrate contacts are provided by residues 72 to 74 and 91 to 92; these read VES and HE.

The protein belongs to the GTP cyclohydrolase I family. QueF type 1 subfamily.

The protein resides in the cytoplasm. It carries out the reaction 7-aminomethyl-7-carbaguanine + 2 NADP(+) = 7-cyano-7-deazaguanine + 2 NADPH + 3 H(+). The protein operates within tRNA modification; tRNA-queuosine biosynthesis. Catalyzes the NADPH-dependent reduction of 7-cyano-7-deazaguanine (preQ0) to 7-aminomethyl-7-deazaguanine (preQ1). The protein is NADPH-dependent 7-cyano-7-deazaguanine reductase of Helicobacter pylori (strain G27).